A 608-amino-acid polypeptide reads, in one-letter code: Aspartate--tRNA(Asp/Asn) ligase (608 aa).

Residue Glu179 coordinates L-aspartate. The tract at residues Gln203–Lys206 is aspartate. Position 225 (Arg225) interacts with L-aspartate. Residues Arg225 to Glu227 and Gln234 contribute to the ATP site. His461 lines the L-aspartate pocket. Position 494 (Glu494) interacts with ATP. Arg501 serves as a coordination point for L-aspartate. Gly546 to Arg549 serves as a coordination point for ATP.

It belongs to the class-II aminoacyl-tRNA synthetase family. Type 1 subfamily. Homodimer.

It is found in the cytoplasm. The enzyme catalyses tRNA(Asx) + L-aspartate + ATP = L-aspartyl-tRNA(Asx) + AMP + diphosphate. Its function is as follows. Aspartyl-tRNA synthetase with relaxed tRNA specificity since it is able to aspartylate not only its cognate tRNA(Asp) but also tRNA(Asn). Reaction proceeds in two steps: L-aspartate is first activated by ATP to form Asp-AMP and then transferred to the acceptor end of tRNA(Asp/Asn). In Psychrobacter arcticus (strain DSM 17307 / VKM B-2377 / 273-4), this protein is Aspartate--tRNA(Asp/Asn) ligase.